The sequence spans 506 residues: Apolipoprotein N-acyltransferase (506 aa).

7 consecutive transmembrane segments (helical) span residues 10 to 30 (ANAK…AGWG), 33 to 53 (LALP…PLWW), 57 to 77 (VLAP…FYGS), 105 to 125 (IWLC…LLMA), 139 to 159 (WGVT…LWWI), 176 to 196 (LAGP…VTLS), and 205 to 225 (VGLA…SVRV). Residues 238 to 473 (IQGNIPTREK…FVIYAATIFR (236 aa)) enclose the CN hydrolase domain. The Proton acceptor role is filled by E279. K336 is an active-site residue. The active-site Nucleophile is the C385. Residues 483–500 (YGDWLLPLLLGMLSLSVL) traverse the membrane as a helical segment.

This sequence belongs to the CN hydrolase family. Apolipoprotein N-acyltransferase subfamily.

It localises to the cell inner membrane. The enzyme catalyses N-terminal S-1,2-diacyl-sn-glyceryl-L-cysteinyl-[lipoprotein] + a glycerophospholipid = N-acyl-S-1,2-diacyl-sn-glyceryl-L-cysteinyl-[lipoprotein] + a 2-acyl-sn-glycero-3-phospholipid + H(+). It participates in protein modification; lipoprotein biosynthesis (N-acyl transfer). Catalyzes the phospholipid dependent N-acylation of the N-terminal cysteine of apolipoprotein, the last step in lipoprotein maturation. This is Apolipoprotein N-acyltransferase from Thermosynechococcus vestitus (strain NIES-2133 / IAM M-273 / BP-1).